Here is a 220-residue protein sequence, read N- to C-terminus: Small ribosomal subunit protein uS2 (220 aa).

Positions 201-220 (LPPDGDLPEPPSEFEVKFKR) are disordered.

Belongs to the universal ribosomal protein uS2 family.

This chain is Small ribosomal subunit protein uS2, found in Staphylothermus marinus (strain ATCC 43588 / DSM 3639 / JCM 9404 / F1).